A 290-amino-acid polypeptide reads, in one-letter code: Probable ECF RNA polymerase sigma factor SigI (290 aa).

A sigma-70 factor domain-2 region spans residues 11–74; it reads WRAHRAYLVD…LCLDHIKSAS (64 aa). A Polymerase core binding motif is present at residues 34–37; it reads DMVQ. The tract at residues 110-162 is sigma-70 factor domain-4_2; it reads LALLIMLERLGPAERVVFVLHEIFGLPYQQIATTIGSQASTCRQLAHRARRKI. The segment at residues 137–156 is a DNA-binding region (H-T-H motif); it reads YQQIATTIGSQASTCRQLAH.

The protein belongs to the sigma-70 factor family. ECF subfamily. As to quaternary structure, interacts transiently with the RNA polymerase catalytic core formed by RpoA, RpoB, RpoC and RpoZ (2 alpha, 1 beta, 1 beta' and 1 omega subunit) to form the RNA polymerase holoenzyme that can initiate transcription.

Its function is as follows. Sigma factors are initiation factors that promote the attachment of RNA polymerase to specific initiation sites and are then released. Extracytoplasmic function (ECF) sigma factors are held in an inactive form by a cognate anti-sigma factor until released, although no anti-sigma factor is known for this protein. This is Probable ECF RNA polymerase sigma factor SigI (sigI) from Mycobacterium tuberculosis (strain CDC 1551 / Oshkosh).